The following is a 125-amino-acid chain: Glycine cleavage system H protein (125 aa).

The 83-residue stretch at 19–101 (GAVVGITDFA…NGSGWFFKLT (83 aa)) folds into the Lipoyl-binding domain. Lysine 60 is modified (N6-lipoyllysine).

This sequence belongs to the GcvH family. As to quaternary structure, the glycine cleavage system is composed of four proteins: P, T, L and H. Requires (R)-lipoate as cofactor.

In terms of biological role, the glycine cleavage system catalyzes the degradation of glycine. The H protein shuttles the methylamine group of glycine from the P protein to the T protein. The sequence is that of Glycine cleavage system H protein from Methylocella silvestris (strain DSM 15510 / CIP 108128 / LMG 27833 / NCIMB 13906 / BL2).